We begin with the raw amino-acid sequence, 199 residues long: MAKVLVLYYSAYGHIETMANAVAEGAREAGATVDIKRVPELVPPEIAKASHYKLDQAAPIATVDDLANYDAIIIGTGTRFGRITSQMANFLDQAGGLWAKGVLHGKVGGAFTSTASQHGGQETTLFSIITNLLHFGMVVVGLNYGYGGLTTLDEVAGGSPYGATTITGGDGARQPSANELGGARYQGKVIAETAIKLHG.

The region spanning 4–190 is the Flavodoxin-like domain; that stretch reads VLVLYYSAYG…GGARYQGKVI (187 aa). Residues 10–15 and 78–80 each bind FMN; these read SAYGHI and TRF. Residue Y12 participates in NAD(+) binding. A substrate-binding site is contributed by W98. FMN-binding positions include 113 to 119 and H134; that span reads STASQHG.

The protein belongs to the WrbA family. The cofactor is FMN.

The enzyme catalyses a quinone + NADH + H(+) = a quinol + NAD(+). It catalyses the reaction a quinone + NADPH + H(+) = a quinol + NADP(+). The chain is NAD(P)H dehydrogenase (quinone) from Rhodopseudomonas palustris (strain BisB18).